The primary structure comprises 335 residues: DNA polymerase beta (335 aa).

Residue K41 forms a Glycyl lysine isopeptide (Lys-Gly) (interchain with G-Cter in ubiquitin) linkage. K60 contributes to the K(+) binding site. K60 is a Na(+) binding site. Residue K61 forms a Glycyl lysine isopeptide (Lys-Gly) (interchain with G-Cter in ubiquitin) linkage. 2 residues coordinate K(+): L62 and V65. Residues L62 and V65 each contribute to the Na(+) site. K72 acts as the Nucleophile; Schiff-base intermediate with DNA; for 5'-dRP lyase activity in catalysis. K72 is modified (N6-acetyllysine). K81 is covalently cross-linked (Glycyl lysine isopeptide (Lys-Gly) (interchain with G-Cter in ubiquitin)). At R83 the chain carries Omega-N-methylarginine; by PRMT6. Residues T101, V103, and I106 each coordinate K(+). The Na(+) site is built by T101, V103, and I106. A dATP-binding site is contributed by R149. R149 contributes to the dCTP binding site. Residue R149 coordinates dGTP. R149 is a binding site for dTTP. R152 is modified (omega-N-methylarginine; by PRMT6). DATP contacts are provided by S180, R183, G189, and D190. Positions 180, 183, 189, and 190 each coordinate dCTP. DGTP contacts are provided by S180, R183, G189, D190, and D192. DTTP is bound by residues S180, R183, G189, and D190. Positions 183-192 are DNA-binding; sequence RGAESSGDMD. The Mg(2+) site is built by D190, D192, and D256.

It belongs to the DNA polymerase type-X family. In terms of assembly, monomer. Binds single-stranded DNA (ssDNA). Interacts with APEX1, LIG1, LIG3, FEN1, PCNA and XRCC1. Interacts with HUWE1/ARF-BP1, STUB1/CHIP and USP47. Interacts with FAM168A. Mg(2+) is required as a cofactor. In terms of processing, methylation by PRMT6 stimulates the polymerase activity by enhancing DNA binding and processivity. Ubiquitinated at Lys-41, Lys-61 and Lys-81: monoubiquitinated by HUWE1/ARF-BP1. Monoubiquitinated protein is then the target of STUB1/CHIP, which catalyzes polyubiquitination from monoubiquitin, leading to degradation by the proteasome. USP47 mediates the deubiquitination of monoubiquitinated protein, preventing polyubiquitination by STUB1/CHIP and its subsequent degradation.

It localises to the nucleus. It is found in the cytoplasm. It catalyses the reaction DNA(n) + a 2'-deoxyribonucleoside 5'-triphosphate = DNA(n+1) + diphosphate. The enzyme catalyses a 5'-end 2'-deoxyribose-2'-deoxyribonucleotide-DNA = (2E,4S)-4-hydroxypenten-2-al-5-phosphate + a 5'-end 5'-phospho-2'-deoxyribonucleoside-DNA + H(+). It carries out the reaction 2'-deoxyribonucleotide-(2'-deoxyribose 5'-phosphate)-2'-deoxyribonucleotide-DNA = a 3'-end 2'-deoxyribonucleotide-(2,3-dehydro-2,3-deoxyribose 5'-phosphate)-DNA + a 5'-end 5'-phospho-2'-deoxyribonucleoside-DNA + H(+). Functionally, repair polymerase that plays a key role in base-excision repair. During this process, the damaged base is excised by specific DNA glycosylases, the DNA backbone is nicked at the abasic site by an apurinic/apyrimidic (AP) endonuclease, and POLB removes 5'-deoxyribose-phosphate from the preincised AP site acting as a 5'-deoxyribose-phosphate lyase (5'-dRP lyase); through its DNA polymerase activity, it adds one nucleotide to the 3' end of the arising single-nucleotide gap. Conducts 'gap-filling' DNA synthesis in a stepwise distributive fashion rather than in a processive fashion as for other DNA polymerases. It is also able to cleave sugar-phosphate bonds 3' to an intact AP site, acting as an AP lyase. This is DNA polymerase beta (POLB) from Homo sapiens (Human).